The chain runs to 491 residues: Cholesterol 22-monohydroxylase CYP90B51 (491 aa).

The helical transmembrane segment at 6–26 (ITFYCLSSILSVLLIFIFILI) threads the bilayer. Residue Cys-437 coordinates heme.

It belongs to the cytochrome P450 family. In terms of tissue distribution, mainly expressed in leaves and seed pods and, to a lower extent, in flowers and stems.

It localises to the membrane. The catalysed reaction is cholesterol + reduced [NADPH--hemoprotein reductase] + O2 = (22S)-22-hydroxycholesterol + oxidized [NADPH--hemoprotein reductase] + H2O + H(+). The protein operates within steroid metabolism; cholesterol metabolism. Canonical brassinosteroid (BR)-biosynthetic enzyme capable of converting cholesterol to 22S-hydroxycholesterol via sterol-C22 hydroxylation. This chain is Cholesterol 22-monohydroxylase CYP90B51, found in Trigonella foenum-graecum (Fenugreek).